The chain runs to 254 residues: MSFPYFISPEQAMRERSELARKGIARGRSVIALAYADGVLFVAENPSRSLQKVSELYDRIGFAAVGRFNEFNNLRSGGIRFADTQGYAYSRRDVTGRQLANVYAQTLGTIFTEQAKPYEVELCVAEVAHHGETKAPELYRITYDGSIADEPHFVVMGGTTEPISTALNESYKENLSLADAVSIAVKALGAGVNGAEPRTLGPATLEVAVLDANRPRRAFRRITGSALEALLPEVDSSESSNEAEAGAEKGSGES.

A disordered region spans residues 232–254 (PEVDSSESSNEAEAGAEKGSGES).

This sequence belongs to the peptidase T1A family. In terms of assembly, the 20S proteasome core is composed of 14 alpha and 14 beta subunits that assemble into four stacked heptameric rings, resulting in a barrel-shaped structure. The two inner rings, each composed of seven catalytic beta subunits, are sandwiched by two outer rings, each composed of seven alpha subunits. The catalytic chamber with the active sites is on the inside of the barrel. Has a gated structure, the ends of the cylinder being occluded by the N-termini of the alpha-subunits. Is capped by the proteasome-associated ATPase, ARC.

The protein localises to the cytoplasm. Its pathway is protein degradation; proteasomal Pup-dependent pathway. With respect to regulation, the formation of the proteasomal ATPase ARC-20S proteasome complex, likely via the docking of the C-termini of ARC into the intersubunit pockets in the alpha-rings, may trigger opening of the gate for substrate entry. Interconversion between the open-gate and close-gate conformations leads to a dynamic regulation of the 20S proteasome proteolysis activity. Its function is as follows. Component of the proteasome core, a large protease complex with broad specificity involved in protein degradation. In Mycolicibacterium vanbaalenii (strain DSM 7251 / JCM 13017 / BCRC 16820 / KCTC 9966 / NRRL B-24157 / PYR-1) (Mycobacterium vanbaalenii), this protein is Proteasome subunit alpha.